Consider the following 717-residue polypeptide: Eukaryotic translation initiation factor 3 subunit B (717 aa).

The segment at 1–89 (MTVEDNLDID…VFIEYETGEM (89 aa)) is sufficient for interaction with HCR1 and TIF32. Positions 1 to 216 (MTVEDNLDID…GVQLWGGPDW (216 aa)) are sufficient for interaction with PIC8. Positions 28–115 (SFIVVDGAPV…HKLLVNKLSE (88 aa)) constitute an RRM domain. 6 WD repeats span residues 183–221 (RERW…PPIC), 223–284 (FQHP…PVRT), 293–332 (GASM…LLDK), 445–484 (ELKD…NRHT), 506–549 (FDKK…DRKH), and 564–609 (SEHY…QREE).

The protein belongs to the eIF-3 subunit B family. In terms of assembly, component of the eukaryotic translation initiation factor 3 (eIF-3) complex.

It is found in the cytoplasm. Its function is as follows. RNA-binding component of the eukaryotic translation initiation factor 3 (eIF-3) complex, which is involved in protein synthesis of a specialized repertoire of mRNAs and, together with other initiation factors, stimulates binding of mRNA and methionyl-tRNAi to the 40S ribosome. The eIF-3 complex specifically targets and initiates translation of a subset of mRNAs involved in cell proliferation. The protein is Eukaryotic translation initiation factor 3 subunit B of Yarrowia lipolytica (strain CLIB 122 / E 150) (Yeast).